The following is a 130-amino-acid chain: Glycine cleavage system H protein (130 aa).

The region spanning 22 to 103 is the Lipoyl-binding domain; that stretch reads KAYIGISDCA…PYGSWIIAVE (82 aa). The residue at position 63 (Lys63) is an N6-lipoyllysine.

The protein belongs to the GcvH family. As to quaternary structure, the glycine cleavage system is composed of four proteins: P, T, L and H. It depends on (R)-lipoate as a cofactor.

In terms of biological role, the glycine cleavage system catalyzes the degradation of glycine. The H protein shuttles the methylamine group of glycine from the P protein to the T protein. The sequence is that of Glycine cleavage system H protein from Clostridium botulinum (strain Kyoto / Type A2).